The chain runs to 518 residues: GTPase MTG2, mitochondrial (518 aa).

Residues 1 to 23 constitute a mitochondrion transit peptide; that stretch reads MSIAWSSVFKRELRLERFLPRVY. The region spanning 89–339 is the Obg domain; it reads GNFVDVRIVK…QHFLFELKSI (251 aa). The OBG-type G domain maps to 340–512; it reads ADLGLIGLPN…LKKKMFKCAR (173 aa). GTP is bound by residues 346–353, 394–398, and 460–463; these read GLPNAGKS, DIPGI, and NKVD.

Belongs to the TRAFAC class OBG-HflX-like GTPase superfamily. OBG GTPase family. As to quaternary structure, interacts with the mitochondrial 54S large ribosomal subunit.

It localises to the mitochondrion inner membrane. Required for mitochondrial protein synthesis. May be involved in mitochondrial ribosome biogenesis. The sequence is that of GTPase MTG2, mitochondrial (MTG2) from Saccharomyces cerevisiae (strain ATCC 204508 / S288c) (Baker's yeast).